The chain runs to 247 residues: Reticulon-like protein B8 (247 aa).

The 187-residue stretch at 61 to 247 folds into the Reticulon domain; the sequence is SADVLLWRNK…SGKFGLKKRE (187 aa). The next 3 membrane-spanning stretches (helical) occupy residues 71–91, 92–112, and 166–186; these read KISASVLMGATAIWVLFEWIN, FHFLSLVCYALLLGMIAQFVW, and FLMAVIGLWVAAMVGSCCNFL.

The protein resides in the endoplasmic reticulum membrane. This is Reticulon-like protein B8 (RTNLB8) from Arabidopsis thaliana (Mouse-ear cress).